The sequence spans 250 residues: 7-cyano-7-deazaguanine synthase (250 aa).

Residue F21–L31 coordinates ATP. The Zn(2+) site is built by C209, C224, C227, and C230.

Belongs to the QueC family. Zn(2+) is required as a cofactor.

The enzyme catalyses 7-carboxy-7-deazaguanine + NH4(+) + ATP = 7-cyano-7-deazaguanine + ADP + phosphate + H2O + H(+). The protein operates within purine metabolism; 7-cyano-7-deazaguanine biosynthesis. Catalyzes the ATP-dependent conversion of 7-carboxy-7-deazaguanine (CDG) to 7-cyano-7-deazaguanine (preQ(0)). This chain is 7-cyano-7-deazaguanine synthase, found in Caulobacter sp. (strain K31).